Consider the following 208-residue polypeptide: Ribonuclease HII (208 aa).

The region spanning 17-208 (LRVCGIDEAG…SFRLRQLGEK (192 aa)) is the RNase H type-2 domain. A divalent metal cation contacts are provided by aspartate 23, glutamate 24, and aspartate 120.

This sequence belongs to the RNase HII family. Mn(2+) serves as cofactor. Requires Mg(2+) as cofactor.

The protein localises to the cytoplasm. It carries out the reaction Endonucleolytic cleavage to 5'-phosphomonoester.. In terms of biological role, endonuclease that specifically degrades the RNA of RNA-DNA hybrids. This Chlorobium luteolum (strain DSM 273 / BCRC 81028 / 2530) (Pelodictyon luteolum) protein is Ribonuclease HII.